We begin with the raw amino-acid sequence, 175 residues long: MSSVDLASYIRTIPDFPKPGILFRDINPMLRSPEAVAEVIRLLSLVCERTRPDLIVGIESRGFIVGAPLAHQCGLGFVPVRKPGKLPGDVVGIDYSLEYGSDRLEIQADALVGQPRVLVVDDLLATGGTAAATAQLVTQAGGELVGFAFVIELKGLGGRTVLPKDLSVDSLLAYD.

Belongs to the purine/pyrimidine phosphoribosyltransferase family. In terms of assembly, homodimer.

The protein resides in the cytoplasm. It catalyses the reaction AMP + diphosphate = 5-phospho-alpha-D-ribose 1-diphosphate + adenine. Its pathway is purine metabolism; AMP biosynthesis via salvage pathway; AMP from adenine: step 1/1. In terms of biological role, catalyzes a salvage reaction resulting in the formation of AMP, that is energically less costly than de novo synthesis. The protein is Adenine phosphoribosyltransferase of Synechococcus sp. (strain CC9902).